Consider the following 188-residue polypeptide: Elongation factor P (188 aa).

Lysine 34 carries the post-translational modification N6-(3,6-diaminohexanoyl)-5-hydroxylysine.

This sequence belongs to the elongation factor P family. In terms of processing, may be beta-lysylated on the epsilon-amino group of Lys-34 by the combined action of EpmA and EpmB, and then hydroxylated on the C5 position of the same residue by EpmC (if this protein is present). Lysylation is critical for the stimulatory effect of EF-P on peptide-bond formation. The lysylation moiety may extend toward the peptidyltransferase center and stabilize the terminal 3-CCA end of the tRNA. Hydroxylation of the C5 position on Lys-34 may allow additional potential stabilizing hydrogen-bond interactions with the P-tRNA.

It localises to the cytoplasm. It functions in the pathway protein biosynthesis; polypeptide chain elongation. Its function is as follows. Involved in peptide bond synthesis. Alleviates ribosome stalling that occurs when 3 or more consecutive Pro residues or the sequence PPG is present in a protein, possibly by augmenting the peptidyl transferase activity of the ribosome. Modification of Lys-34 is required for alleviation. The sequence is that of Elongation factor P from Pseudoalteromonas translucida (strain TAC 125).